We begin with the raw amino-acid sequence, 349 residues long: Insulin gene enhancer protein ISL-1 (349 aa).

2 consecutive LIM zinc-binding domains span residues 17–70 and 79–133; these read CVGC…CKRD and CAKC…RADH. The homeobox DNA-binding region spans 181–240; that stretch reads TTRVRTVLNEKQLHTLRTCYAANPRPDALMKEQLVEMTGLSPRVIRVWFQNKRCKDKKRS. The tract at residues 312–349 is disordered; sequence VNFSEGGPGSNSTGSEVASMSSQLPDTPNSMVASPIEA. Residues 321–343 show a composition bias toward polar residues; sequence SNSTGSEVASMSSQLPDTPNSMV.

Its subcellular location is the nucleus. Functionally, acts as a transcriptional regulator. Recognizes and binds to the consensus octamer binding site 5'-ATAATTAA-3' in promoter of target genes. Plays a fundamental role in the gene regulatory network essential for retinal ganglion cell (RGC) differentiation. Binds to insulin gene enhancer sequences. Defines subclasses of motoneurons that segregate into columns in the spinal cord and select distinct axon pathways. Acts in conjunction with LHX1, LHX3 and ISL2. Binds to insulin gene enhancer sequences. Essential for heart development. This is Insulin gene enhancer protein ISL-1 (ISL1) from Gallus gallus (Chicken).